A 242-amino-acid polypeptide reads, in one-letter code: Tryptophan synthase alpha chain (242 aa).

Active-site proton acceptor residues include Glu31 and Asp42.

This sequence belongs to the TrpA family. Tetramer of two alpha and two beta chains.

The catalysed reaction is (1S,2R)-1-C-(indol-3-yl)glycerol 3-phosphate + L-serine = D-glyceraldehyde 3-phosphate + L-tryptophan + H2O. Its pathway is amino-acid biosynthesis; L-tryptophan biosynthesis; L-tryptophan from chorismate: step 5/5. Its function is as follows. The alpha subunit is responsible for the aldol cleavage of indoleglycerol phosphate to indole and glyceraldehyde 3-phosphate. The protein is Tryptophan synthase alpha chain of Staphylococcus aureus (strain MRSA252).